The sequence spans 168 residues: MGSLRILGVDPGYGIVGIGIIEVSGNRISHVFHGTIETPKNLPAEKRLKRIYEEFLKVLERFSPDECAMEKLFFVKNVTTAIGVGEARGVLFLALAEKNIPVFEYAPNEVKVSLSGYGRASKKQIQENVKRFLNLSEIPRPDDAADALAIAWCHALQSRARRVTHEKD.

Active-site residues include aspartate 10, glutamate 70, and aspartate 143. Mg(2+) contacts are provided by aspartate 10, glutamate 70, and aspartate 143.

Belongs to the RuvC family. Homodimer which binds Holliday junction (HJ) DNA. The HJ becomes 2-fold symmetrical on binding to RuvC with unstacked arms; it has a different conformation from HJ DNA in complex with RuvA. In the full resolvosome a probable DNA-RuvA(4)-RuvB(12)-RuvC(2) complex forms which resolves the HJ. The cofactor is Mg(2+).

The protein localises to the cytoplasm. The enzyme catalyses Endonucleolytic cleavage at a junction such as a reciprocal single-stranded crossover between two homologous DNA duplexes (Holliday junction).. Its function is as follows. The RuvA-RuvB-RuvC complex processes Holliday junction (HJ) DNA during genetic recombination and DNA repair. Endonuclease that resolves HJ intermediates. Cleaves cruciform DNA by making single-stranded nicks across the HJ at symmetrical positions within the homologous arms, yielding a 5'-phosphate and a 3'-hydroxyl group; requires a central core of homology in the junction. The consensus cleavage sequence is 5'-(A/T)TT(C/G)-3'. Cleavage occurs on the 3'-side of the TT dinucleotide at the point of strand exchange. HJ branch migration catalyzed by RuvA-RuvB allows RuvC to scan DNA until it finds its consensus sequence, where it cleaves and resolves the cruciform DNA. The chain is Crossover junction endodeoxyribonuclease RuvC from Thermotoga maritima (strain ATCC 43589 / DSM 3109 / JCM 10099 / NBRC 100826 / MSB8).